The primary structure comprises 557 residues: Nicotinate phosphoribosyltransferase 2 (557 aa).

Residues Tyr-31 and Thr-219 each coordinate nicotinate. His-222 is subject to Phosphohistidine. A nicotinate-binding site is contributed by Arg-329. Thr-391 is a binding site for 5-phospho-alpha-D-ribose 1-diphosphate.

This sequence belongs to the NAPRTase family. It depends on Mg(2+) as a cofactor. Mn(2+) serves as cofactor. In terms of processing, transiently phosphorylated on a His residue during the reaction cycle. Phosphorylation strongly increases the affinity for substrates and increases the rate of nicotinate D-ribonucleotide production. Dephosphorylation regenerates the low-affinity form of the enzyme, leading to product release.

It catalyses the reaction nicotinate + 5-phospho-alpha-D-ribose 1-diphosphate + ATP + H2O = nicotinate beta-D-ribonucleotide + ADP + phosphate + diphosphate. The protein operates within cofactor biosynthesis; NAD(+) biosynthesis; nicotinate D-ribonucleotide from nicotinate: step 1/1. In terms of biological role, catalyzes the first step in the biosynthesis of NAD from nicotinic acid, the ATP-dependent synthesis of beta-nicotinate D-ribonucleotide from nicotinate and 5-phospho-D-ribose 1-phosphate. Helps prevent cellular oxidative stress via its role in NAD biosynthesis. In Arabidopsis thaliana (Mouse-ear cress), this protein is Nicotinate phosphoribosyltransferase 2.